Consider the following 1294-residue polypeptide: Voltage-gated inwardly rectifying potassium channel KCNH2 (1294 aa).

The Cytoplasmic portion of the chain corresponds to 1-377; that stretch reads RKFIIANARV…RIHRWTILHY (377 aa). The PAS domain occupies 15–44; sequence VIYCNDGFCELCGYSRAEVMQRPCTCDFLH. The PAC domain maps to 66–118; it reads RKVEIAFYRKDGSCFLCLVDVVPVKNEDGAVIMFILNFEVVMEKDMVGSPARD. The interval 207–258 is disordered; that stretch reads LVAPGSPPSSVPGPPHTSPRAHSLNPDASGSSCSLARTRSRESCASVRRASS. Pro residues predominate over residues 211 to 223; it reads GSPPSSVPGPPHT. A phosphoserine mark is found at Ser-212 and Ser-216. Residues 232–243 are compositionally biased toward polar residues; the sequence is PDASGSSCSLAR. Phosphoserine occurs at positions 257, 258, 294, and 325. A helical transmembrane segment spans residues 378 to 398; it reads SPFKAVWDWLILLLVIYTAVF. At 399-424 the chain is on the extracellular side; the sequence is TPYSAAFLLKEPEEDAQTADCGYACQ. A helical membrane pass occupies residues 425-445; sequence PLAVVDLIVDIMFIVDILINF. Residues 446–469 lie on the Cytoplasmic side of the membrane; that stretch reads RTTYVNANEEVVSHPGRIAVHYFK. A helical transmembrane segment spans residues 470–490; it reads GWFLIDMVAAIPFDLLIFGSG. The Extracellular portion of the chain corresponds to 491–494; that stretch reads SEEL. Residues 495–515 traverse the membrane as a helical; Voltage-sensor segment; that stretch reads IGLLKTARLLRLVRVARKLDR. Residues 516 to 521 are Cytoplasmic-facing; it reads YSEYGA. The helical transmembrane segment at 522-542 threads the bilayer; the sequence is AVLFLLMCTFALIAHWLACIW. At 543–585 the chain is on the extracellular side; sequence YAIGNMEQPDMNSRIGWLHNLGDQIGKPYNSSGLGGPSIKDKY. Residues 586–606 constitute an intramembrane region (pore-forming); that stretch reads VTALYFTFSSLTSVGFGNVSP. Residues 598-603 carry the Selectivity filter motif; sequence SVGFGN. Residues 607-612 are Extracellular-facing; sequence NTNSEK. A helical membrane pass occupies residues 613–633; that stretch reads IFSICVMLIGSLMYASIFGNV. The Cytoplasmic portion of the chain corresponds to 634 to 1294; it reads SAIIQRLYSG…IAHWLACIWY (661 aa). Positions 716–816 are cNMP-binding domain; the sequence is PFRGATKGCL…IHRDDLLEVL (101 aa). The segment at 844-956 is disordered; that stretch reads GSPGSTELEG…LTEDGDKSDT (113 aa). Residues Ser-845 and Ser-848 each carry the phosphoserine modification. A compositionally biased stretch (basic residues) spans 857–866; the sequence is RQRRRKLSFR. Over residues 902–913 the composition is skewed to low complexity; that stretch reads GDSPSSGPSSPE. Arg-987 carries the post-translational modification Omega-N-methylarginine. Residues 1008–1035 adopt a coiled-coil conformation; the sequence is RGDVESRLDALQRQLNRLETRLSADMAT. Ser-1110 bears the Phosphoserine mark.

Belongs to the potassium channel family. H (Eag) (TC 1.A.1.20) subfamily. Kv11.1/KCNH2 sub-subfamily. As to quaternary structure, the potassium channel is probably composed of a homo- or heterotetrameric complex of pore-forming alpha subunits that can associate with modulating beta subunits. Interacts with DNAJB12 and DNAJB14; chaperones DNAJB12 and DNAJB14 promote tetramerization. Heteromultimer with KCNH6/ERG2 and KCNH7/ERG3. Interacts with ALG10B. Forms a stable complex with KCNE1 or KCNE2, and that this heteromultimerization regulates Inward rectifier potassium channel activity. Interacts with CANX. The core-glycosylated, but not the fully glycosylated form interacts with RNF207. Interacts with NDFIP1 and NDFIP2; this interaction decreases the cell membrane expression by targeting KCNH2, through interaction with NEDD4L, for the degradation through the multivesicular bodies (MVBs)-lysosomal pathway. In terms of processing, phosphorylated on serine and threonine residues. Phosphorylation by PKA inhibits ion conduction. As to expression, highly expressed in heart and brain.

It localises to the cell membrane. The enzyme catalyses K(+)(in) = K(+)(out). In terms of biological role, pore-forming (alpha) subunit of voltage-gated inwardly rectifying potassium channel. Characterized by unusual gating kinetics by producing relatively small outward currents during membrane depolarization and large inward currents during subsequent repolarization which reflect a rapid inactivation during depolarization and quick recovery from inactivation but slow deactivation (closing) during repolarization. Channel properties are modulated by cAMP and subunit assembly. Forms a stable complex with KCNE1 or KCNE2, and that this heteromultimerization regulates inward rectifier potassium channel activity. This chain is Voltage-gated inwardly rectifying potassium channel KCNH2, found in Cavia porcellus (Guinea pig).